The following is a 134-amino-acid chain: MRSVLTISVGLLFGLALSSVAHANDHKILGVIAMPRNETNDLALKIPVCRIVKRIQLTADHGDIELSGASVYFKTARSASQSLNVPSSIKEGQTTGWININSDNDNKRCVSKITFSGHTVNSSDMARLKVIGDD.

Residues 1–23 (MRSVLTISVGLLFGLALSSVAHA) form the signal peptide.

This sequence belongs to the UPF0412 family.

The sequence is that of UPF0412 protein YaaI from Salmonella paratyphi A (strain ATCC 9150 / SARB42).